The chain runs to 438 residues: MKLLTLGINHHTAPVAIREKVAFDPEFLQEALHDLRQHLLGANQSGLPEATILSTCNRTEVYCAANDANAANILHEATFDWLAKTQQLAPSSLQPHIYSLPQSDAVRHAFRVACGLDSMVIGETQILGQMKDAVRTANDAGVLGTYLNQLFQKTFAVAKEVRGSTEIGTHSISMAAASVRLSERIFEKISEQKILFIGAGDMITLCATHFVARKPKNVAIANRTIERGQELADSISAQDVQAESLKLSELPGRLHEFDIIVSSTASSLPIIGLGMVESALKQRRHKPMVMIDLAVPRDFEPEIARLDDVYLYTVDDLGVMIQTGTNLRQAAVSQAEAIIEDRVGNFMHWMQGRNAVPVIQDIQQQGERLRQLELERAMKRLMRGDDPQEVLNAMAQGLTNKFLHGSLHALQHSNGAERDALIKLLPKLFASHSKPEDH.

Substrate contacts are provided by residues 55–58 (TCNR), Ser118, 123–125 (ETQ), and Gln129. Cys56 serves as the catalytic Nucleophile. Residue 198–203 (GAGDMI) participates in NADP(+) binding.

Belongs to the glutamyl-tRNA reductase family. Homodimer.

The catalysed reaction is (S)-4-amino-5-oxopentanoate + tRNA(Glu) + NADP(+) = L-glutamyl-tRNA(Glu) + NADPH + H(+). The protein operates within porphyrin-containing compound metabolism; protoporphyrin-IX biosynthesis; 5-aminolevulinate from L-glutamyl-tRNA(Glu): step 1/2. In terms of biological role, catalyzes the NADPH-dependent reduction of glutamyl-tRNA(Glu) to glutamate 1-semialdehyde (GSA). The protein is Glutamyl-tRNA reductase of Polynucleobacter asymbioticus (strain DSM 18221 / CIP 109841 / QLW-P1DMWA-1) (Polynucleobacter necessarius subsp. asymbioticus).